Here is a 186-residue protein sequence, read N- to C-terminus: Elongation factor P (186 aa).

The protein belongs to the elongation factor P family.

It is found in the cytoplasm. It functions in the pathway protein biosynthesis; polypeptide chain elongation. Involved in peptide bond synthesis. Stimulates efficient translation and peptide-bond synthesis on native or reconstituted 70S ribosomes in vitro. Probably functions indirectly by altering the affinity of the ribosome for aminoacyl-tRNA, thus increasing their reactivity as acceptors for peptidyl transferase. The sequence is that of Elongation factor P from Cupriavidus pinatubonensis (strain JMP 134 / LMG 1197) (Cupriavidus necator (strain JMP 134)).